The primary structure comprises 319 residues: High mobility group B protein 10 (319 aa).

Over residues 1-13 the composition is skewed to polar residues; the sequence is MSTDISPPYSQTH. Positions 1 to 25 are disordered; that stretch reads MSTDISPPYSQTHVEPVNGYPSDNK. The ARID domain occupies 40–131; it reads VRNSALFWEK…FLFQLEHVYY (92 aa). Polar residues predominate over residues 203–220; sequence PSQSQQTMETPSAIVQSS. The disordered stretch occupies residues 203 to 230; the sequence is PSQSQQTMETPSAIVQSSQRRHRKKSKL. The segment at residues 238–305 is a DNA-binding region (HMG box); sequence PKCHRSGYNF…RYRIEMLEYK (68 aa).

In terms of tissue distribution, ubiquitously expressed.

The protein localises to the nucleus. Functionally, binds preferentially DNA with A/T-rich content. In Arabidopsis thaliana (Mouse-ear cress), this protein is High mobility group B protein 10 (HMGB10).